The primary structure comprises 423 residues: Histidine--tRNA ligase (423 aa).

The protein belongs to the class-II aminoacyl-tRNA synthetase family. In terms of assembly, homodimer.

Its subcellular location is the cytoplasm. It carries out the reaction tRNA(His) + L-histidine + ATP = L-histidyl-tRNA(His) + AMP + diphosphate + H(+). The chain is Histidine--tRNA ligase from Haemophilus influenzae (strain 86-028NP).